Here is a 91-residue protein sequence, read N- to C-terminus: CRISPR-associated endoribonuclease Cas2 (91 aa).

Residue aspartate 14 coordinates Mg(2+).

It belongs to the CRISPR-associated endoribonuclease Cas2 protein family. In terms of assembly, homodimer, forms a heterotetramer with a Cas1 homodimer. Mg(2+) serves as cofactor.

CRISPR (clustered regularly interspaced short palindromic repeat), is an adaptive immune system that provides protection against mobile genetic elements (viruses, transposable elements and conjugative plasmids). CRISPR clusters contain sequences complementary to antecedent mobile elements and target invading nucleic acids. CRISPR clusters are transcribed and processed into CRISPR RNA (crRNA). Functions as a ssRNA-specific endoribonuclease. Involved in the integration of spacer DNA into the CRISPR cassette. This is CRISPR-associated endoribonuclease Cas2 from Nanoarchaeum equitans (strain Kin4-M).